A 511-amino-acid polypeptide reads, in one-letter code: Sodium/proline symporter 2 (511 aa).

13 consecutive transmembrane segments (helical) span residues 16 to 36 (WQTYIMIIIYFTILLFIGYYG), 54 to 74 (IGPYVTALSAGASDMSGWMIM), 85 to 105 (LSAMWITIGLSLGAYVNYFVV), 139 to 159 (IISGLIIVVFFTLYTHSGFVS), 175 to 195 (GLLMVAFIVIFYTFFGGYLAV), 204 to 224 (VIMLIAMVMVPIVALIDLNGI), 246 to 266 (VLGIISLFAWGLGYFGQPHII), 286 to 306 (ISWMVIGLLGAVAVGLTGIAF), 327 to 347 (ILFHPLVGGFLLAAILAAIMS), 381 to 401 (FLMVGRLSVLIVAIVAIWIAW), 410 to 430 (LVGNAWAGFGAAFSPLVIFSL), 438 to 458 (TGALAGMITGALVVIIWIVWI), and 467 to 487 (LFGMYEIIPGFLASVITTYFV).

It belongs to the sodium:solute symporter (SSF) (TC 2.A.21) family.

The protein resides in the cell membrane. It carries out the reaction L-proline(in) + Na(+)(in) = L-proline(out) + Na(+)(out). In terms of biological role, catalyzes the sodium-dependent uptake of extracellular L-proline. This chain is Sodium/proline symporter 2 (putP2), found in Staphylococcus saprophyticus subsp. saprophyticus (strain ATCC 15305 / DSM 20229 / NCIMB 8711 / NCTC 7292 / S-41).